The primary structure comprises 240 residues: Cysteine-rich venom protein (240 aa).

The first 19 residues, 1-19 (MIAFIVLPILAAVLHQSSG), serve as a signal peptide directing secretion. One can recognise an SCP domain in the interval 39–166 (DLHNSLRRSV…KYRYFYVCQY (128 aa)). 8 disulfides stabilise this stretch: C75–C153, C92–C167, C148–C164, C186–C193, C189–C198, C202–C235, C211–C229, and C220–C233. In terms of domain architecture, ShKT spans 202 to 235 (CTQENTYSNCNSLVQQSSCQDNNMKTKCPASCFC).

This sequence belongs to the CRISP family. As to expression, expressed by the venom gland.

The protein resides in the secreted. Functionally, may block ryanodine receptors (RYR). The protein is Cysteine-rich venom protein of Protobothrops mucrosquamatus (Taiwan habu).